Reading from the N-terminus, the 516-residue chain is Thiosulfate sulfurtransferase/rhodanese-like domain-containing protein 2 (516 aa).

Residue Ser-269 is modified to Phosphoserine. Residues 301–396 (EQSDTILLDC…YLEEFPDGFY (96 aa)) enclose the Rhodanese domain. The active-site Cysteine persulfide intermediate is the Cys-355. A disordered region spans residues 490–516 (RELLQHVRQPVSPEPGPDAEEDGPVLV). The span at 506–516 (PDAEEDGPVLV) shows a compositional bias: acidic residues.

The protein is Thiosulfate sulfurtransferase/rhodanese-like domain-containing protein 2 (TSTD2) of Pongo abelii (Sumatran orangutan).